Reading from the N-terminus, the 457-residue chain is Argininosuccinate lyase (457 aa).

It belongs to the lyase 1 family. Argininosuccinate lyase subfamily.

Its subcellular location is the cytoplasm. It catalyses the reaction 2-(N(omega)-L-arginino)succinate = fumarate + L-arginine. The protein operates within amino-acid biosynthesis; L-arginine biosynthesis; L-arginine from L-ornithine and carbamoyl phosphate: step 3/3. This Shigella boydii serotype 18 (strain CDC 3083-94 / BS512) protein is Argininosuccinate lyase.